The following is a 407-amino-acid chain: 1-deoxy-D-xylulose 5-phosphate reductoisomerase (407 aa).

NADPH-binding residues include T25, G26, S27, I28, N53, and N136. K137 is a binding site for 1-deoxy-D-xylulose 5-phosphate. Residue E138 participates in NADPH binding. D162 lines the Mn(2+) pocket. 1-deoxy-D-xylulose 5-phosphate contacts are provided by S163, E164, S188, and H211. E164 is a binding site for Mn(2+). Residue G217 participates in NADPH binding. Positions 224, 229, 230, and 233 each coordinate 1-deoxy-D-xylulose 5-phosphate. E233 lines the Mn(2+) pocket.

This sequence belongs to the DXR family. It depends on Mg(2+) as a cofactor. Mn(2+) is required as a cofactor.

It catalyses the reaction 2-C-methyl-D-erythritol 4-phosphate + NADP(+) = 1-deoxy-D-xylulose 5-phosphate + NADPH + H(+). The protein operates within isoprenoid biosynthesis; isopentenyl diphosphate biosynthesis via DXP pathway; isopentenyl diphosphate from 1-deoxy-D-xylulose 5-phosphate: step 1/6. In terms of biological role, catalyzes the NADPH-dependent rearrangement and reduction of 1-deoxy-D-xylulose-5-phosphate (DXP) to 2-C-methyl-D-erythritol 4-phosphate (MEP). The sequence is that of 1-deoxy-D-xylulose 5-phosphate reductoisomerase from Bradyrhizobium sp. (strain ORS 278).